The primary structure comprises 564 residues: Protein CPR-5 (564 aa).

Residues 1 to 87 (MEALLLPPSP…TSNSNSTKRV (87 aa)) form a disordered region. Residues 12 to 28 (PQNQITNPANSKPNHQS) show a composition bias toward polar residues. A compositionally biased stretch (basic and acidic residues) spans 29–38 (GDVHKDETMM). The span at 69–84 (SSSYCSTSSTSNSNST) shows a compositional bias: low complexity. Helical transmembrane passes span 347 to 367 (IMDWLLVSVFSMLASMVLGVY), 411 to 431 (VRVWVQIFFGVLMIIVFTYFL), 443 to 463 (PISFIVLFLGIFCGVSGKLCV), 472 to 492 (LWLIVWEVFCLLQFVANVFTL), and 526 to 546 (VYVVILFVLPVINGLLPFATF).

Interacts with SIM and SMR1. In terms of tissue distribution, ubiquitous.

The protein resides in the membrane. It is found in the nucleus membrane. In terms of biological role, may play a role in transcriptional processes. Negatively regulates the senescence and chlorotic lesions induced by biotic (e.g. pathogens) and abiotic (e.g. sugars, darkness) agents, probably by controlling programmed cell death (pcd). Negative regulator of plant programmed cell death (PCD) and effector-triggered immunity (ETI). Promotes cell division and endoreduplication (e.g. in trichomes). The sequence is that of Protein CPR-5 from Arabidopsis thaliana (Mouse-ear cress).